Reading from the N-terminus, the 93-residue chain is RNA-binding protein Hfq (93 aa).

The Sm domain maps to 9-68 (DPYLNALRRERIPVSIYLVNGIKLQGQIESFDQFVILLKNTVSQMVYKHAISTVVPARAI). Low complexity predominate over residues 70–81 (HNNNSNHAHQAA). The tract at residues 70 to 93 (HNNNSNHAHQAAPVQSAEVVEKVE) is disordered.

Belongs to the Hfq family. In terms of assembly, homohexamer.

Its function is as follows. RNA chaperone that binds small regulatory RNA (sRNAs) and mRNAs to facilitate mRNA translational regulation in response to envelope stress, environmental stress and changes in metabolite concentrations. Also binds with high specificity to tRNAs. This is RNA-binding protein Hfq from Glaesserella parasuis serovar 5 (strain SH0165) (Haemophilus parasuis).